A 452-amino-acid polypeptide reads, in one-letter code: Probable ECA polymerase (452 aa).

Helical transmembrane passes span 6 to 26 (FSGL…LTWF), 37 to 57 (VFFS…TSVL), 63 to 83 (VGVA…CFYG), 118 to 138 (VILM…NGFL), 155 to 175 (GVAL…VYFL), 181 to 201 (AWLF…MIVG), 207 to 227 (IIIA…ISLW), 228 to 248 (MLAA…LKRY), 341 to 361 (LVVM…GLII), 378 to 398 (YKAA…IVLA), and 410 to 430 (VFFL…FWLF).

This sequence belongs to the WzyE family. As to quaternary structure, probably part of a complex composed of WzxE, WzyE and WzzE.

It is found in the cell inner membrane. The protein operates within bacterial outer membrane biogenesis; enterobacterial common antigen biosynthesis. Its function is as follows. Probably involved in the polymerization of enterobacterial common antigen (ECA) trisaccharide repeat units. The sequence is that of Probable ECA polymerase from Salmonella choleraesuis (strain SC-B67).